Reading from the N-terminus, the 321-residue chain is ATP-dependent 6-phosphofructokinase (321 aa).

Gly11 contacts ATP. 21–25 (RAVVR) contributes to the ADP binding site. Residues 72-73 (RC) and 102-105 (GDGS) each bind ATP. Position 103 (Asp103) interacts with Mg(2+). 126–128 (TID) contacts substrate. The active-site Proton acceptor is the Asp128. An ADP-binding site is contributed by Arg155. Residues Arg163 and 170 to 172 (MGR) contribute to the substrate site. ADP is bound by residues 186-188 (GAE), Arg212, and 214-216 (KLH). Substrate is bound by residues Glu223, Arg245, and 251–254 (HIQR).

This sequence belongs to the phosphofructokinase type A (PFKA) family. ATP-dependent PFK group I subfamily. Prokaryotic clade 'B1' sub-subfamily. As to quaternary structure, homotetramer. Mg(2+) serves as cofactor.

Its subcellular location is the cytoplasm. The enzyme catalyses beta-D-fructose 6-phosphate + ATP = beta-D-fructose 1,6-bisphosphate + ADP + H(+). It functions in the pathway carbohydrate degradation; glycolysis; D-glyceraldehyde 3-phosphate and glycerone phosphate from D-glucose: step 3/4. With respect to regulation, allosterically activated by ADP and other diphosphonucleosides, and allosterically inhibited by phosphoenolpyruvate. Functionally, catalyzes the phosphorylation of D-fructose 6-phosphate to fructose 1,6-bisphosphate by ATP, the first committing step of glycolysis. In Thermoanaerobacter pseudethanolicus (strain ATCC 33223 / 39E) (Clostridium thermohydrosulfuricum), this protein is ATP-dependent 6-phosphofructokinase.